A 544-amino-acid chain; its full sequence is MTMGDSDLRKPTNFGTGHLSRRRSWCCSFAVPPASPDTRSISSRNHIPAKSQQQRPKLVPCSPQSSKSALNIVNRIDPRRILSPGRVSPIDSDPTVTTMQETETTQEEEDDAVVVDSTPNLRSESFRAPKIEVTGSGLSEGYDARLSLKGRNGGGVLVLELSLEVLAANSDVFSGLIAEEKKCSSSSSSLGLKNTCRIEVCDVENLGVFRETVELMFEESNVIIKKFMTMGVYRAIDVLEVAAGIKFSRAVLSCLKYLEAVPWTEDEEEKLRRLLGIYSFDDDAVSEILARFNSNETENLQDSLSKKLVWSITSCSDVNPRNELKSLVKGLLCKSSVYEKEQPEINKEDIYRAGKCCVDSLAKLFEEGSSSSSSKKEKPLIESISREVENINWLLEIMIDREIAEEFVEIWGKQRRLVEMHERVSPMVRYEVSRVTGAIFIAMGKRRVQCGGEARAGLVEAWFKPMLVDFGWLQRCKKGLDMREVEEGMGQTLLTLPVKEQYQVFMEWFRWFSKHGTECPNLSKAFQIWWRRSFLRGVESSTCR.

2 disordered regions span residues 34 to 66 (ASPD…PQSS) and 82 to 111 (LSPG…EEDD). Polar residues predominate over residues 37–55 (DTRSISSRNHIPAKSQQQR). Low complexity predominate over residues 93 to 103 (DPTVTTMQETE). The BTB domain occupies 142–225 (YDARLSLKGR…MFEESNVIIK (84 aa)).

It participates in protein modification; protein ubiquitination. May act as a substrate-specific adapter of an E3 ubiquitin-protein ligase complex (CUL3-RBX1-BTB) which mediates the ubiquitination and subsequent proteasomal degradation of target proteins. This chain is BTB/POZ domain-containing protein At2g13690 (PRL1-IFG), found in Arabidopsis thaliana (Mouse-ear cress).